A 704-amino-acid chain; its full sequence is DNA ligase (704 aa).

NAD(+)-binding positions include 44-48 (DYEYD), 93-94 (SI), and E125. K127 functions as the N6-AMP-lysine intermediate in the catalytic mechanism. The NAD(+) site is built by R148, E184, K300, and K324. C418, C421, C436, and C442 together coordinate Zn(2+). The BRCT domain maps to 625–704 (IISSNISGKI…DEWEHLINEK (80 aa)).

This sequence belongs to the NAD-dependent DNA ligase family. LigA subfamily. Mg(2+) serves as cofactor. Requires Mn(2+) as cofactor.

The catalysed reaction is NAD(+) + (deoxyribonucleotide)n-3'-hydroxyl + 5'-phospho-(deoxyribonucleotide)m = (deoxyribonucleotide)n+m + AMP + beta-nicotinamide D-nucleotide.. DNA ligase that catalyzes the formation of phosphodiester linkages between 5'-phosphoryl and 3'-hydroxyl groups in double-stranded DNA using NAD as a coenzyme and as the energy source for the reaction. It is essential for DNA replication and repair of damaged DNA. This Pelobacter propionicus (strain DSM 2379 / NBRC 103807 / OttBd1) protein is DNA ligase.